A 520-amino-acid polypeptide reads, in one-letter code: Anthranilate synthase component 1 (520 aa).

L-tryptophan contacts are provided by residues serine 40 and 291-293 (PYM). 328–329 (GT) serves as a coordination point for chorismate. Glutamate 361 provides a ligand contact to Mg(2+). Chorismate contacts are provided by residues tyrosine 449, arginine 469, 483-485 (GAG), and glycine 485. Glutamate 498 lines the Mg(2+) pocket.

The protein belongs to the anthranilate synthase component I family. Heterotetramer consisting of two non-identical subunits: a beta subunit (TrpG) and a large lpha subunit (TrpE). Requires Mg(2+) as cofactor.

It catalyses the reaction chorismate + L-glutamine = anthranilate + pyruvate + L-glutamate + H(+). Its pathway is amino-acid biosynthesis; L-tryptophan biosynthesis; L-tryptophan from chorismate: step 1/5. With respect to regulation, cooperatively feedback inhibited by tryptophan. Its function is as follows. Part of a heterotetrameric complex that catalyzes the two-step biosynthesis of anthranilate, an intermediate in the biosynthesis of L-tryptophan. In the first step, the glutamine-binding beta subunit (TrpG) of anthranilate synthase (AS) provides the glutamine amidotransferase activity which generates ammonia as a substrate that, along with chorismate, is used in the second step, catalyzed by the large alpha subunit of AS (TrpE) to produce anthranilate. In the absence of TrpG, TrpE can synthesize anthranilate directly from chorismate and high concentrations of ammonia. This is Anthranilate synthase component 1 (trpE) from Escherichia coli (strain K12).